The chain runs to 194 residues: Peptidyl-tRNA hydrolase (194 aa).

Tyrosine 17 contributes to the tRNA binding site. Histidine 22 serves as the catalytic Proton acceptor. Residues tyrosine 68, asparagine 70, and asparagine 116 each contribute to the tRNA site.

Belongs to the PTH family. In terms of assembly, monomer.

Its subcellular location is the cytoplasm. The enzyme catalyses an N-acyl-L-alpha-aminoacyl-tRNA + H2O = an N-acyl-L-amino acid + a tRNA + H(+). Functionally, hydrolyzes ribosome-free peptidyl-tRNAs (with 1 or more amino acids incorporated), which drop off the ribosome during protein synthesis, or as a result of ribosome stalling. Catalyzes the release of premature peptidyl moieties from peptidyl-tRNA molecules trapped in stalled 50S ribosomal subunits, and thus maintains levels of free tRNAs and 50S ribosomes. This Pseudomonas fluorescens (strain ATCC BAA-477 / NRRL B-23932 / Pf-5) protein is Peptidyl-tRNA hydrolase.